The sequence spans 234 residues: Core atranone cluster (CAC) protein 1 (234 aa).

It participates in mycotoxin biosynthesis. Functionally, part of the core atranone cluster (CAC) which products are predicted to catalyze most or all steps of mycotoxin atranone synthesis, starting from geranylgeranyl pyrophosphate (GGPP). The initial cyclization of GGPP to dolabellane is probably performed by the terpene cyclase ATR13. The Baeyer-Villiger oxidation near the end of the atranone synthesis, which converts atranones D and E to atranones F and G is predicted to be catalyzed by the monooxygenase ATR8. Of the CAC's other predicted gene products, the reducing PKS ATR6 might synthesize a polyketide chain. This polyketide is probably transferred onto the atranone backbone by the polyketide transferase ATR5. Other predicted CAC products include 4 oxygenases (ATR2, ATR3, ATR4, and ATR14), 3 short-chain reductases (ATR7, ATR9, and ATR10), and a methyltransferase (ATR12). These may all be involved in the various steps of atranone biosynthesis, although their specific roles must await experimental determination. The protein is Core atranone cluster (CAC) protein 1 of Stachybotrys chlorohalonatus (strain IBT 40285).